A 207-amino-acid chain; its full sequence is Protein N-terminal glutamine amidohydrolase (207 aa).

Catalysis depends on residues Cys30, His83, and Asp99.

It belongs to the NTAQ1 family. Monomer.

The protein resides in the cytoplasm. It localises to the cytosol. Its subcellular location is the nucleus. The enzyme catalyses N-terminal L-glutaminyl-[protein] + H2O = N-terminal L-glutamyl-[protein] + NH4(+). Functionally, mediates the side-chain deamidation of N-terminal glutamine residues to glutamate, an important step in N-end rule pathway of protein degradation. Conversion of the resulting N-terminal glutamine to glutamate renders the protein susceptible to arginylation, polyubiquitination and degradation as specified by the N-end rule. Does not act on substrates with internal or C-terminal glutamine and does not act on non-glutamine residues in any position. Does not deaminate acetylated N-terminal glutamine. With the exception of proline, all tested second-position residues on substrate peptides do not greatly influence the activity. In contrast, a proline at position 2, virtually abolishes deamidation of N-terminal glutamine. The protein is Protein N-terminal glutamine amidohydrolase (Ntaq1) of Rattus norvegicus (Rat).